Reading from the N-terminus, the 172-residue chain is Large ribosomal subunit protein uL10 (172 aa).

It belongs to the universal ribosomal protein uL10 family. In terms of assembly, part of the ribosomal stalk of the 50S ribosomal subunit. The N-terminus interacts with L11 and the large rRNA to form the base of the stalk. The C-terminus forms an elongated spine to which L12 dimers bind in a sequential fashion forming a multimeric L10(L12)X complex.

Functionally, forms part of the ribosomal stalk, playing a central role in the interaction of the ribosome with GTP-bound translation factors. The chain is Large ribosomal subunit protein uL10 from Ruegeria sp. (strain TM1040) (Silicibacter sp.).